Here is a 221-residue protein sequence, read N- to C-terminus: UPF0328 protein ECU11_2110 (221 aa).

Belongs to the UPF0328 family.

This chain is UPF0328 protein ECU11_2110, found in Encephalitozoon cuniculi (strain GB-M1) (Microsporidian parasite).